The sequence spans 353 residues: Photosystem II D2 protein (353 aa).

Thr2 carries the post-translational modification N-acetylthreonine. Phosphothreonine is present on Thr2. A helical transmembrane segment spans residues 41-61 (CAYFALGGWFTGTTFVTSWYT). Residue His118 participates in chlorophyll a binding. The helical transmembrane segment at 125–141 (GFMLRQFELARSVQLRP) threads the bilayer. The pheophytin a site is built by Gln130 and Asn143. The helical transmembrane segment at 153-166 (VFVSVFLIYPLGQS) threads the bilayer. His198 contacts chlorophyll a. The helical transmembrane segment at 208-228 (AALLCAIHGATVENTLFEDGD) threads the bilayer. A plastoquinone-binding residues include His215 and Phe262. His215 provides a ligand contact to Fe cation. His269 is a binding site for Fe cation. The helical transmembrane segment at 279–295 (GLWMSAIGVVGLALNLR) threads the bilayer.

It belongs to the reaction center PufL/M/PsbA/D family. As to quaternary structure, PSII is composed of 1 copy each of membrane proteins PsbA, PsbB, PsbC, PsbD, PsbE, PsbF, PsbH, PsbI, PsbJ, PsbK, PsbL, PsbM, PsbT, PsbX, PsbY, PsbZ, Psb30/Ycf12, at least 3 peripheral proteins of the oxygen-evolving complex and a large number of cofactors. It forms dimeric complexes. The D1/D2 heterodimer binds P680, chlorophylls that are the primary electron donor of PSII, and subsequent electron acceptors. It shares a non-heme iron and each subunit binds pheophytin, quinone, additional chlorophylls, carotenoids and lipids. There is also a Cl(-1) ion associated with D1 and D2, which is required for oxygen evolution. The PSII complex binds additional chlorophylls, carotenoids and specific lipids. is required as a cofactor.

The protein localises to the plastid. Its subcellular location is the chloroplast thylakoid membrane. It carries out the reaction 2 a plastoquinone + 4 hnu + 2 H2O = 2 a plastoquinol + O2. Photosystem II (PSII) is a light-driven water:plastoquinone oxidoreductase that uses light energy to abstract electrons from H(2)O, generating O(2) and a proton gradient subsequently used for ATP formation. It consists of a core antenna complex that captures photons, and an electron transfer chain that converts photonic excitation into a charge separation. The D1/D2 (PsbA/PsbD) reaction center heterodimer binds P680, the primary electron donor of PSII as well as several subsequent electron acceptors. D2 is needed for assembly of a stable PSII complex. The protein is Photosystem II D2 protein of Phalaenopsis aphrodite subsp. formosana (Moth orchid).